The primary structure comprises 415 residues: uncharacterized protein (415 aa).

Helical transmembrane passes span 20–40, 43–63, 78–98, 109–129, 155–175, 243–263, 300–320, 328–348, 360–380, and 388–408; these read MAYL…FGIL, LMPI…PAIA, IPIL…TPYI, LPNI…VIAF, VILV…LSIS, IVIM…SSLI, IFSS…LIAF, GILC…YTLI, ISFY…LILV, and GSLA…FAIL.

It belongs to the polysaccharide synthase family.

The protein resides in the cell membrane. This is an uncharacterized protein from Methanocaldococcus jannaschii (strain ATCC 43067 / DSM 2661 / JAL-1 / JCM 10045 / NBRC 100440) (Methanococcus jannaschii).